The primary structure comprises 179 residues: Large ribosomal subunit protein uL5 (179 aa).

The protein belongs to the universal ribosomal protein uL5 family. In terms of assembly, part of the 50S ribosomal subunit; part of the 5S rRNA/L5/L18/L25 subcomplex. Contacts the 5S rRNA and the P site tRNA. Forms a bridge to the 30S subunit in the 70S ribosome.

This is one of the proteins that bind and probably mediate the attachment of the 5S RNA into the large ribosomal subunit, where it forms part of the central protuberance. In the 70S ribosome it contacts protein S13 of the 30S subunit (bridge B1b), connecting the 2 subunits; this bridge is implicated in subunit movement. Contacts the P site tRNA; the 5S rRNA and some of its associated proteins might help stabilize positioning of ribosome-bound tRNAs. This chain is Large ribosomal subunit protein uL5, found in Glaesserella parasuis serovar 5 (strain SH0165) (Haemophilus parasuis).